We begin with the raw amino-acid sequence, 181 residues long: Insulin-like growth factor 2 (181 aa).

The N-terminal stretch at 1-24 is a signal peptide; the sequence is MGIPMRKPLLVLLVFLALASCCYA. The b stretch occupies residues 25–52; the sequence is AYRPSETLCGGELVDTLQFVCGDRGFYF. Intrachain disulfides connect cysteine 33-cysteine 71, cysteine 45-cysteine 84, and cysteine 70-cysteine 75. Residues 53–64 are c; sequence SRPASRVNRRSR. An a region spans residues 65–85; it reads GIVEECCFRSCDLALLETYCA. The interval 86–91 is d; sequence TPAKSE. The propeptide at 92–181 is e peptide; that stretch reads RDVSTPPTVL…ASPEASGHRK (90 aa). Positions 151–181 are disordered; that stretch reads EAKRHRPLTARPTRDPAAHGGASPEASGHRK. Threonine 163 carries O-linked (GalNAc...) threonine glycosylation.

Belongs to the insulin family. Interacts with MYORG; this interaction is required for IGF2 secretion. Interacts with integrins ITGAV:ITGB3 and ITGA6:ITGB4; integrin-binding is required for IGF2 signaling. Interacts with IGFBP2. Proteolytically processed by PCSK4, proIGF2 is cleaved at Arg-128 and Arg-92 to generate big-IGF2 and mature IGF2.

The protein resides in the secreted. In terms of biological role, the insulin-like growth factors possess growth-promoting activity. Major fetal growth hormone in mammals. Plays a key role in regulating fetoplacental development. IGF2 is influenced by placental lactogen. Also involved in tissue differentiation. In adults, involved in glucose metabolism in adipose tissue, skeletal muscle and liver. Acts as a ligand for integrin which is required for IGF2 signaling. Positively regulates myogenic transcription factor MYOD1 function by facilitating the recruitment of transcriptional coactivators, thereby controlling muscle terminal differentiation. Inhibits myoblast differentiation and modulates metabolism via increasing the mitochondrial respiration rate. Its function is as follows. Preptin undergoes glucose-mediated co-secretion with insulin, and acts as a physiological amplifier of glucose-mediated insulin secretion. Exhibits osteogenic properties by increasing osteoblast mitogenic activity through phosphoactivation of MAPK1 and MAPK3. This is Insulin-like growth factor 2 from Sus scrofa (Pig).